The chain runs to 574 residues: Serine/threonine-protein kinase fray1 (574 aa).

Residues Asn-24–Glu-41 are compositionally biased toward basic and acidic residues. Residues Asn-24 to His-64 are disordered. The Protein kinase domain occupies Tyr-97–Phe-357. ATP is bound by residues Ile-103–Val-111 and Lys-126. Catalysis depends on Asp-221, which acts as the Proton acceptor. Thr-256 carries the post-translational modification Phosphothreonine; by autocatalysis. 3 disordered regions span residues Tyr-381–Met-447, Leu-462–Glu-514, and Phe-532–His-554. Low complexity-rich tracts occupy residues Ser-386–Pro-403, Lys-418–Asn-441, and Leu-462–Leu-475. The span at Gly-478–Ser-491 shows a compositional bias: basic residues. Residues Pro-492–Pro-506 show a composition bias toward low complexity. The span at Lys-536–His-553 shows a compositional bias: basic and acidic residues.

Belongs to the protein kinase superfamily. STE Ser/Thr protein kinase family. STE20 subfamily. The cofactor is Mn(2+). In terms of processing, undergoes autophosphorylation in the catalytic domain.

It carries out the reaction L-seryl-[protein] + ATP = O-phospho-L-seryl-[protein] + ADP + H(+). The catalysed reaction is L-threonyl-[protein] + ATP = O-phospho-L-threonyl-[protein] + ADP + H(+). The polypeptide is Serine/threonine-protein kinase fray1 (Dictyostelium discoideum (Social amoeba)).